Consider the following 946-residue polypeptide: RIPOR family member 3 (946 aa).

Residues Ser9, Ser24, and Ser340 each carry the phosphoserine modification. Residue Thr345 is modified to Phosphothreonine. 2 positions are modified to phosphoserine: Ser351 and Ser384. Residues 390-512 (GPSLRSQSQE…GDREDGPGVA (123 aa)) are disordered. A compositionally biased stretch (basic and acidic residues) spans 437–446 (SIEEEAREDP). A compositionally biased stretch (polar residues) spans 478-495 (SLPQGSLFHSGTASSSQN). Basic and acidic residues predominate over residues 496–508 (GHEEGATGDREDG).

This sequence belongs to the RIPOR family.

The protein is RIPOR family member 3 of Homo sapiens (Human).